We begin with the raw amino-acid sequence, 173 residues long: Crossover junction endodeoxyribonuclease RuvC (173 aa).

Residues D8, E67, and D139 contribute to the active site. Residues D8, E67, and D139 each contribute to the Mg(2+) site.

It belongs to the RuvC family. As to quaternary structure, homodimer which binds Holliday junction (HJ) DNA. The HJ becomes 2-fold symmetrical on binding to RuvC with unstacked arms; it has a different conformation from HJ DNA in complex with RuvA. In the full resolvosome a probable DNA-RuvA(4)-RuvB(12)-RuvC(2) complex forms which resolves the HJ. Requires Mg(2+) as cofactor.

The protein localises to the cytoplasm. The enzyme catalyses Endonucleolytic cleavage at a junction such as a reciprocal single-stranded crossover between two homologous DNA duplexes (Holliday junction).. Its function is as follows. The RuvA-RuvB-RuvC complex processes Holliday junction (HJ) DNA during genetic recombination and DNA repair. Endonuclease that resolves HJ intermediates. Cleaves cruciform DNA by making single-stranded nicks across the HJ at symmetrical positions within the homologous arms, yielding a 5'-phosphate and a 3'-hydroxyl group; requires a central core of homology in the junction. The consensus cleavage sequence is 5'-(A/T)TT(C/G)-3'. Cleavage occurs on the 3'-side of the TT dinucleotide at the point of strand exchange. HJ branch migration catalyzed by RuvA-RuvB allows RuvC to scan DNA until it finds its consensus sequence, where it cleaves and resolves the cruciform DNA. The sequence is that of Crossover junction endodeoxyribonuclease RuvC from Aeromonas hydrophila subsp. hydrophila (strain ATCC 7966 / DSM 30187 / BCRC 13018 / CCUG 14551 / JCM 1027 / KCTC 2358 / NCIMB 9240 / NCTC 8049).